The following is a 419-amino-acid chain: Equilibrative nucleotide transporter 5 (419 aa).

11 helical membrane passes run 20–40 (MVVCCILGIGSLVSWNSLLSV), 56–76 (VLTFVYQPFSIGTIVIFAYNE), 86–106 (LIGYIVFTTSIFLLIILDLAT), 108–128 (GHGGIGPYIVLCAIVGSFGFA), 142–162 (LMCPELIQSFVAGLAVAGALT), 186–206 (IFLAISTLVEFLCVLLYAYVF), 265–285 (YVVNLFLIYVLTLSILPGFLY), 292–312 (GLGSWYALVLIAMYNWWDLVG), 327–347 (KGLTVAVLTRFLLVPAFYFTA), 354–374 (WMILLVSILGLTNGHLTVCIL), and 393–413 (LVLFILWGAFVGCALGWLWLI).

The protein belongs to the SLC29A/ENT transporter (TC 2.A.57) family.

It localises to the cell membrane. Its function is as follows. May be involved in nucleoside transport. In Arabidopsis thaliana (Mouse-ear cress), this protein is Equilibrative nucleotide transporter 5 (ENT5).